Consider the following 430-residue polypeptide: Enolase (430 aa).

Position 163 (Q163) interacts with (2R)-2-phosphoglycerate. E205 acts as the Proton donor in catalysis. Positions 242, 287, and 314 each coordinate Mg(2+). (2R)-2-phosphoglycerate is bound by residues K339, R368, S369, and K390. K339 functions as the Proton acceptor in the catalytic mechanism.

Belongs to the enolase family. Requires Mg(2+) as cofactor.

It is found in the cytoplasm. It localises to the secreted. The protein localises to the cell surface. It catalyses the reaction (2R)-2-phosphoglycerate = phosphoenolpyruvate + H2O. It participates in carbohydrate degradation; glycolysis; pyruvate from D-glyceraldehyde 3-phosphate: step 4/5. Functionally, catalyzes the reversible conversion of 2-phosphoglycerate (2-PG) into phosphoenolpyruvate (PEP). It is essential for the degradation of carbohydrates via glycolysis. The sequence is that of Enolase from Geobacillus sp. (strain WCH70).